We begin with the raw amino-acid sequence, 434 residues long: Enolase (434 aa).

(2R)-2-phosphoglycerate is bound at residue Gln163. Glu205 serves as the catalytic Proton donor. The Mg(2+) site is built by Asp242, Glu291, and Asp318. (2R)-2-phosphoglycerate-binding residues include Lys343, Arg372, Ser373, and Lys394. Lys343 functions as the Proton acceptor in the catalytic mechanism.

The protein belongs to the enolase family. Mg(2+) serves as cofactor.

The protein localises to the cytoplasm. It is found in the secreted. It localises to the cell surface. It carries out the reaction (2R)-2-phosphoglycerate = phosphoenolpyruvate + H2O. Its pathway is carbohydrate degradation; glycolysis; pyruvate from D-glyceraldehyde 3-phosphate: step 4/5. Catalyzes the reversible conversion of 2-phosphoglycerate (2-PG) into phosphoenolpyruvate (PEP). It is essential for the degradation of carbohydrates via glycolysis. The polypeptide is Enolase (Streptococcus thermophilus (strain CNRZ 1066)).